We begin with the raw amino-acid sequence, 229 residues long: MKKQGAPVSGGGTERLTKPSCLMVGSAVAEGVSAQSFLHSFTLASSAFNLQVATPGGKALDFVGISETDSRWFQDFQLKPYSNPARLESIDGSRYHALLIPHCPGALTDLANSGYLARILQHFTAEKKPICAIGHGVTALCCATNQDKSWVFQNYSLTGPSVYELVRRPEYASLPLILEDYAKDSGATFSASEPDAIHVVLDRHLITGQNDNSTMPAVQNLILLCNGRK.

An N-terminal signal peptide occupies residues 1–34; it reads MKKQGAPVSGGGTERLTKPSCLMVGSAVAEGVSA. Asparagine 154 and asparagine 212 each carry an N-linked (GlcNAc...) asparagine glycan.

It belongs to the peptidase C56 family. Homotetramer. Component of the FERRY complex.

It localises to the secreted. Its subcellular location is the early endosome. In terms of biological role, component of the FERRY complex (Five-subunit Endosomal Rab5 and RNA/ribosome intermediary). The FERRY complex directly interacts with mRNAs and RAB5A, and functions as a RAB5A effector involved in the localization and the distribution of specific mRNAs most likely by mediating their endosomal transport. The complex recruits mRNAs and ribosomes to early endosomes through direct mRNA-interaction. This chain is Glutamine amidotransferase-like class 1 domain-containing protein 1, found in Xenopus laevis (African clawed frog).